The following is a 240-amino-acid chain: UDP-2,3-diacylglucosamine hydrolase (240 aa).

Residues aspartate 8, histidine 10, aspartate 41, asparagine 79, and histidine 114 each contribute to the Mn(2+) site. 79–80 lines the substrate pocket; the sequence is NR. Residues aspartate 122, serine 160, asparagine 164, lysine 167, and histidine 195 each contribute to the substrate site. Residues histidine 195 and histidine 197 each contribute to the Mn(2+) site.

This sequence belongs to the LpxH family. The cofactor is Mn(2+).

Its subcellular location is the cell inner membrane. The catalysed reaction is UDP-2-N,3-O-bis[(3R)-3-hydroxytetradecanoyl]-alpha-D-glucosamine + H2O = 2-N,3-O-bis[(3R)-3-hydroxytetradecanoyl]-alpha-D-glucosaminyl 1-phosphate + UMP + 2 H(+). It functions in the pathway glycolipid biosynthesis; lipid IV(A) biosynthesis; lipid IV(A) from (3R)-3-hydroxytetradecanoyl-[acyl-carrier-protein] and UDP-N-acetyl-alpha-D-glucosamine: step 4/6. Its function is as follows. Hydrolyzes the pyrophosphate bond of UDP-2,3-diacylglucosamine to yield 2,3-diacylglucosamine 1-phosphate (lipid X) and UMP by catalyzing the attack of water at the alpha-P atom. Involved in the biosynthesis of lipid A, a phosphorylated glycolipid that anchors the lipopolysaccharide to the outer membrane of the cell. The polypeptide is UDP-2,3-diacylglucosamine hydrolase (Escherichia fergusonii (strain ATCC 35469 / DSM 13698 / CCUG 18766 / IAM 14443 / JCM 21226 / LMG 7866 / NBRC 102419 / NCTC 12128 / CDC 0568-73)).